We begin with the raw amino-acid sequence, 153 residues long: UPF0756 membrane protein LSEI_1366 (153 aa).

Transmembrane regions (helical) follow at residues 4–24 (WLFL…SLII), 52–72 (WGVT…EIGF), 85–105 (WIAI…VGLL), and 115–135 (LVFG…GPVI).

Belongs to the UPF0756 family.

It localises to the cell membrane. The protein is UPF0756 membrane protein LSEI_1366 of Lacticaseibacillus paracasei (strain ATCC 334 / BCRC 17002 / CCUG 31169 / CIP 107868 / KCTC 3260 / NRRL B-441) (Lactobacillus paracasei).